We begin with the raw amino-acid sequence, 178 residues long: Interleukin-10 (178 aa).

Positions 1-18 (MHSSALLCYLVFLAGVGA) are cleaved as a signal peptide. Disulfide bonds link C30–C126 and C80–C132. The N-linked (GlcNAc...) asparagine glycan is linked to N67. An N-linked (GlcNAc...) asparagine glycan is attached at N134.

The protein belongs to the IL-10 family. As to quaternary structure, homodimer. Interacts with IL10RA and IL10RB.

It is found in the secreted. Its function is as follows. Major immune regulatory cytokine that acts on many cells of the immune system where it has profound anti-inflammatory functions, limiting excessive tissue disruption caused by inflammation. Mechanistically, IL10 binds to its heterotetrameric receptor comprising IL10RA and IL10RB leading to JAK1 and STAT2-mediated phosphorylation of STAT3. In turn, STAT3 translocates to the nucleus where it drives expression of anti-inflammatory mediators. Targets antigen-presenting cells (APCs) such as macrophages and monocytes and inhibits their release of pro-inflammatory cytokines including granulocyte-macrophage colony-stimulating factor /GM-CSF, granulocyte colony-stimulating factor/G-CSF, IL-1 alpha, IL-1 beta, IL-6, IL-8 and TNF-alpha. Also interferes with antigen presentation by reducing the expression of MHC-class II and co-stimulatory molecules, thereby inhibiting their ability to induce T cell activation. In addition, controls the inflammatory response of macrophages by reprogramming essential metabolic pathways including mTOR signaling. This Equus caballus (Horse) protein is Interleukin-10 (IL10).